A 260-amino-acid polypeptide reads, in one-letter code: Acyl-[acyl-carrier-protein]--UDP-N-acetylglucosamine O-acyltransferase (260 aa).

The protein belongs to the transferase hexapeptide repeat family. LpxA subfamily. In terms of assembly, homotrimer.

The protein localises to the cytoplasm. The catalysed reaction is a (3R)-hydroxyacyl-[ACP] + UDP-N-acetyl-alpha-D-glucosamine = a UDP-3-O-[(3R)-3-hydroxyacyl]-N-acetyl-alpha-D-glucosamine + holo-[ACP]. Its pathway is glycolipid biosynthesis; lipid IV(A) biosynthesis; lipid IV(A) from (3R)-3-hydroxytetradecanoyl-[acyl-carrier-protein] and UDP-N-acetyl-alpha-D-glucosamine: step 1/6. Its function is as follows. Involved in the biosynthesis of lipid A, a phosphorylated glycolipid that anchors the lipopolysaccharide to the outer membrane of the cell. This is Acyl-[acyl-carrier-protein]--UDP-N-acetylglucosamine O-acyltransferase from Sulfurovum sp. (strain NBC37-1).